The following is a 2038-amino-acid chain: HEAT repeat-containing protein 5A (2038 aa).

2 HEAT repeats span residues 850-887 (EVRR…VADD) and 1082-1119 (LLRR…AAAD). Residues 1646–1668 (RSAEVDDGASEKETLPEFGEGKD) form a disordered region. Serine 1647 is modified (phosphoserine).

This sequence belongs to the HEATR5 family.

The polypeptide is HEAT repeat-containing protein 5A (Heatr5a) (Mus musculus (Mouse)).